The sequence spans 291 residues: MTKAELVKELRIRTQASMSECIKALDASENDIEKAIVWLRENGAIKAANKLKNAATDGVVLAKKINNKAILIEVNCQTDFVAKNENFLAYANQILEEALAKVENKEDFDKLIINGKPIAESGLDLTAYIGEKIVFRRGEILKANDDQTLGVYTHNNNRVAAIILVDGKVEDEVVRNVAMHAAAMRPRYLNEKVVDKLWLAKEREIIVNQLEHEGKPAAFAAKIIDGRLNKILKENCLVDQSYFKQPELTIEKYLKNNNAVAVGYFSYEVGEGIEKAPQMSFADEVAAQMKK.

The tract at residues 78–81 is involved in Mg(2+) ion dislocation from EF-Tu; that stretch reads TDFV.

It belongs to the EF-Ts family.

The protein localises to the cytoplasm. Functionally, associates with the EF-Tu.GDP complex and induces the exchange of GDP to GTP. It remains bound to the aminoacyl-tRNA.EF-Tu.GTP complex up to the GTP hydrolysis stage on the ribosome. The protein is Elongation factor Ts of Ureaplasma parvum serovar 3 (strain ATCC 27815 / 27 / NCTC 11736).